The following is a 1214-amino-acid chain: Filamin-A-interacting protein 1 (1214 aa).

Over residues 1–15 (MRSRNQGGESSSNGH) the composition is skewed to polar residues. Residues 1 to 73 (MRSRNQGGES…ESEKKTKKPL (73 aa)) are disordered. 2 stretches are compositionally biased toward basic and acidic residues: residues 32–47 (PSED…KGED) and 61–73 (PSGE…KKPL). Phosphoserine is present on S138. Coiled-coil stretches lie at residues 192–581 (DYMN…KLRS) and 624–778 (PEDN…ELEL). Disordered regions lie at residues 875–898 (KREN…GHPG) and 949–976 (KPRI…GPER). S979 is modified (phosphoserine). The disordered stretch occupies residues 1104-1192 (VSTGTVLRSP…TKFQPRAETQ (89 aa)). A compositionally biased stretch (low complexity) spans 1126–1140 (VTSTITITPVTTSST). The span at 1141–1157 (RGTQSVSGQDGSSQRPT) shows a compositional bias: polar residues. Low complexity predominate over residues 1169–1180 (AGKPVVAAPGAG).

This sequence belongs to the FILIP1 family. Interacts with FLNA. Interacts with RHOD (in GTP-bound form).

Its subcellular location is the cytoplasm. It localises to the cytoskeleton. Its function is as follows. By acting through a filamin-A/F-actin axis, it controls the start of neocortical cell migration from the ventricular zone. May be able to induce the degradation of filamin-A. The chain is Filamin-A-interacting protein 1 (Filip1) from Mus musculus (Mouse).